Consider the following 1230-residue polypeptide: MDVPFPLHRSLSCTSVSNAITHLKIKPILGFVSHGTTSLSVQSSSWRKDGMVTGVSFSICANFSGRRRRKVSTPRSQGSSPKGFVPRKPSGMSTQRKVQKSNGDKESKSTSTSKESEISNQKTVEARVETSDDDTKGVVRDHKFLEDEDEINGSTKSISMSPVRVSSQFVESEETGGDDKDAVKLNKSKRSEESGFIIDSVIREQSGSQGETNASSKGSHAVGTKLYEILQVDVEPQQLKENNAGNVEYKGPVASKLLEITKASDVEHTESNEIDDLDTNSFFKSDLIEEDEPLAAGTVETGDSSLNLRLEMEANLRRQAIERLAEENLLQGIRLFCFPEVVKPDEDVEIFLNRGLSTLKNESDVLIMGAFNEWRYRSFTTRLTETHLNGDWWSCKIHVPKEAYRADFVFFNGQDVYDNNDGNDFSITVKGGMQIIDFENFLLEEKWREQEKLAKEQAERERLAEEQRRIEAEKAEIEADRAQAKEEAAKKKKVLRELMVKATKTRDITWYIEPSEFKCEDKVRLYYNKSSGPLSHAKDLWIHGGYNNWKDGLSIVKKLVKSERIDGDWWYTEVVIPDQALFLDWVFADGPPKHAIAYDNNHRQDFHAIVPNHIPEELYWVEEEHQIFKTLQEERRLREAAMRAKVEKTALLKTETKERTMKSFLLSQKHVVYTEPLDIQAGSSVTVYYNPANTVLNGKPEIWFRCSFNRWTHRLGPLPPQKMSPAENGTHVRATVKVPLDAYMMDFVFSEREDGGIFDNKSGMDYHIPVFGGVAKEPPMHIVHIAVEMAPIAKVGGLGDVVTSLSRAVQDLNHNVDIILPKYDCLKMNNVKDFRFHKNYFWGGTEIKVWFGKVEGLSVYFLEPQNGLFSKGCVYGCSNDGERFGFFCHAALEFLLQGGFSPDIIHCHDWSSAPVAWLFKEQYTHYGLSKSRIVFTIHNLEFGADLIGRAMTNADKATTVSPTYSQEVSGNPVIAPHLHKFHGIVNGIDPDIWDPLNDKFIPIPYTSENVVEGKTAAKEALQRKLGLKQADLPLVGIITRLTHQKGIHLIKHAIWRTLERNGQVVLLGSAPDPRVQNNFVNLANQLHSKYNDRARLCLTYDEPLSHLIYAGADFILVPSIFEPCGLTQLTAMRYGSIPVVRKTGGLYDTVFDVDHDKERAQQCGLEPNGFSFDGADAGGVDYALNRALSAWYDGRDWFNSLCKQVMEQDWSWNRPALDYLELYHAARKLE.

A chloroplast-targeting transit peptide spans 1–60 (MDVPFPLHRSLSCTSVSNAITHLKIKPILGFVSHGTTSLSVQSSSWRKDGMVTGVSFSIC). Positions 66 to 189 (RRRRKVSTPR…KDAVKLNKSK (124 aa)) are disordered. Positions 124–145 (VEARVETSDDDTKGVVRDHKFL) are enriched in basic and acidic residues. The segment covering 152–170 (NGSTKSISMSPVRVSSQFV) has biased composition (polar residues). Basic and acidic residues predominate over residues 177 to 189 (GDDKDAVKLNKSK). Position 794 (K794) interacts with ADP-alpha-D-glucose.

It belongs to the glycosyltransferase 1 family. Bacterial/plant glycogen synthase subfamily. As to expression, tuber, sink and source leaves.

Its subcellular location is the plastid. The protein resides in the chloroplast. The protein localises to the amyloplast. The catalysed reaction is [(1-&gt;4)-alpha-D-glucosyl](n) + ADP-alpha-D-glucose = [(1-&gt;4)-alpha-D-glucosyl](n+1) + ADP + H(+). The protein operates within glycan biosynthesis; starch biosynthesis. May account for most of the soluble starch synthase activity in the tubers. Contributes only a tiny percentage of the granule-bound activity, but may also contribute to the deposition of transient starch in chloroplasts of leaves. In Solanum tuberosum (Potato), this protein is Soluble starch synthase 3, chloroplastic/amyloplastic (SS3).